The chain runs to 502 residues: MNDFPWLTIIVGLPIFAGTLIFFFPHRGNKIIRWYTICICILELLITAYVFCYHFQLDDPLIQLEQDYKWIHFFDFHWRLGIDGLSVGPILLTGFITTLATLAAWPVTRDSRLFHFLMLAMYSGQIGLFSSRDLLLFFIMWEFELIPVYLLLSMWGGKKRLYSATKFILYTAGGSIFLLMGVLGMGLYGSNEPTLNFETSANQPYPVALEILFYFGFLIGYAVKLPIIPLHTWLPDTHGEAHYSTCMLLAGILLKMGAYGLVRINMELLPHAHSIFSPWLIIVGAIQIIYAASTSLGQRNLKKRIAYSSVSHMGFIIIGICSITDTGLNGAILQMISHGFIGAALFFLAGTSYDRIRLVYLDEMGGIAIPMPKIFTMFSSFSMASLALPGMSGFAAELVVFFGLITSQKYLLMPKILITFVTAIGMILTPIYSLSMLRQMFYGYKQFKFKSLNSSFFDSGPRELFVSICIFLPVIGIGIYPDFVLSLSVDKVEAILSNYFYR.

The next 14 helical transmembrane spans lie at 4–24 (FPWL…IFFF), 37–57 (ICIC…HFQL), 87–107 (VGPI…AWPV), 113–130 (LFHF…GLFS), 134–154 (LLLF…LLSM), 167–187 (FILY…GMGL), 208–228 (ALEI…LPII), 242–262 (HYST…YGLV), 272–292 (AHSI…IYAA), 305–325 (IAYS…SITD), 330–350 (GAIL…FLAG), 374–396 (IFTM…GFAA), 416–436 (ILIT…SLSM), and 464–484 (LFVS…PDFV).

It belongs to the complex I subunit 4 family.

It localises to the plastid. The protein resides in the chloroplast thylakoid membrane. It catalyses the reaction a plastoquinone + NADH + (n+1) H(+)(in) = a plastoquinol + NAD(+) + n H(+)(out). It carries out the reaction a plastoquinone + NADPH + (n+1) H(+)(in) = a plastoquinol + NADP(+) + n H(+)(out). The sequence is that of NAD(P)H-quinone oxidoreductase chain 4, chloroplastic from Ranunculus macranthus (Large buttercup).